The sequence spans 388 residues: Chaperone protein DnaJ 1 (388 aa).

Residues 10–74 enclose the J domain; sequence DFYKELGVSS…VKRKEYDETR (65 aa). The CR-type zinc finger occupies 159-237; that stretch reads GVAMPLRLTS…CKGTGVTTRT (79 aa). 8 residues coordinate Zn(2+): cysteine 172, cysteine 175, cysteine 189, cysteine 192, cysteine 211, cysteine 214, cysteine 225, and cysteine 228. CXXCXGXG motif repeat units follow at residues 172-179, 189-196, 211-218, and 225-232; these read CTNCHGSG, CSTCNGSG, CTECRGSG, and CEECKGTG.

Belongs to the DnaJ family. Homodimer. It depends on Zn(2+) as a cofactor.

It localises to the cytoplasm. In terms of biological role, participates actively in the response to hyperosmotic and heat shock by preventing the aggregation of stress-denatured proteins and by disaggregating proteins, also in an autonomous, DnaK-independent fashion. Unfolded proteins bind initially to DnaJ; upon interaction with the DnaJ-bound protein, DnaK hydrolyzes its bound ATP, resulting in the formation of a stable complex. GrpE releases ADP from DnaK; ATP binding to DnaK triggers the release of the substrate protein, thus completing the reaction cycle. Several rounds of ATP-dependent interactions between DnaJ, DnaK and GrpE are required for fully efficient folding. Also involved, together with DnaK and GrpE, in the DNA replication of plasmids through activation of initiation proteins. The chain is Chaperone protein DnaJ 1 from Mycobacterium leprae (strain TN).